The sequence spans 70 residues: Small ribosomal subunit protein bS21A (70 aa).

This sequence belongs to the bacterial ribosomal protein bS21 family.

This is Small ribosomal subunit protein bS21A (rpsU1) from Burkholderia mallei (strain ATCC 23344).